The following is a 396-amino-acid chain: Deoxyuridine 5'-triphosphate nucleotidohydrolase (396 aa).

Residues 280 to 282 (RSS) and 380 to 381 (FG) contribute to the substrate site.

This sequence belongs to the dUTPase family. The cofactor is Mg(2+).

The catalysed reaction is dUTP + H2O = dUMP + diphosphate + H(+). In terms of biological role, involved in nucleotide metabolism: produces dUMP, the immediate precursor of thymidine nucleotides and decreases the intracellular concentration of dUTP to avoid uracil incorporation into viral DNA. The sequence is that of Deoxyuridine 5'-triphosphate nucleotidohydrolase from Varicella-zoster virus (strain Dumas) (HHV-3).